Here is a 353-residue protein sequence, read N- to C-terminus: MHFSSSSTLFTCITLIPLVCLILHASLSDAQLTPTFYDNSCPNVSNIVRDTIVNELRSDPRIAASILRLHFHDCFVNGCDASILLDNTTSFRTEKDAFGNANSARGFPVIDRMKAAVESACPRTVSCADLLTIAAQQSVTLAGGPSWRVPLGRRDSLQAFLDLANANLPAPFFTLPQLKDSFRNVGLNRSSDLVALSGGHTFGKNQCRFIMDRLYNFSNTGLPDPTLNTTYLQTLRGLCPLNGNLSALVDFDLRTPTIFDNKYYVNLEEQKGLIQSDQELFSSPNATDTIPLVRSFANSTQTFFNAFVEAMDRMGNITPLTGTQGQIRLNCRVVNSNSLLHDMVEVVDFVSSM.

Positions 1–30 are cleaved as a signal peptide; the sequence is MHFSSSSTLFTCITLIPLVCLILHASLSDA. Position 31 is a pyrrolidone carboxylic acid (Q31). Disulfide bonds link C41-C121, C74-C79, C127-C331, and C207-C239. N-linked (GlcNAc...) asparagine glycosylation is present at N43. H72 functions as the Proton acceptor in the catalytic mechanism. 5 residues coordinate Ca(2+): D73, V76, G78, D80, and S82. N87 carries N-linked (GlcNAc...) asparagine glycosylation. E94 contributes to the Ca(2+) binding site. P169 is a substrate binding site. N188 is a glycosylation site (N-linked (GlcNAc...) asparagine). Position 200 (H200) interacts with heme b. T201 is a binding site for Ca(2+). 3 N-linked (GlcNAc...) asparagine glycosylation sites follow: N216, N228, and N244. Ca(2+) contacts are provided by D252, T255, and D260. N-linked (GlcNAc...) asparagine glycans are attached at residues N285 and N298. The propeptide occupies 339-353; sequence LLHDMVEVVDFVSSM.

Belongs to the peroxidase family. Classical plant (class III) peroxidase subfamily. As to quaternary structure, monomer. Requires Ca(2+) as cofactor. Heme b serves as cofactor.

Its subcellular location is the secreted. It localises to the vacuole. It catalyses the reaction 2 a phenolic donor + H2O2 = 2 a phenolic radical donor + 2 H2O. In terms of biological role, removal of H(2)O(2), oxidation of toxic reductants, biosynthesis and degradation of lignin, suberization, auxin catabolism, response to environmental stresses such as wounding, pathogen attack and oxidative stress. These functions might be dependent on each isozyme/isoform in each plant tissue. This Armoracia rusticana (Horseradish) protein is Peroxidase C1A (PRXC1A).